Here is an 86-residue protein sequence, read N- to C-terminus: Cyclin-dependent kinase inhibitor 6 (86 aa).

Positions 1–15 (MAAAAATVTAVQPAA) are enriched in low complexity. The interval 1 to 23 (MAAAAATVTAVQPAASSCGKRDG) is disordered.

It belongs to the CDI family. ICK/KRP subfamily.

This is Cyclin-dependent kinase inhibitor 6 (KRP6) from Oryza sativa subsp. japonica (Rice).